The following is a 210-amino-acid chain: Ribulose-phosphate 3-epimerase (210 aa).

Serine 9 contributes to the substrate binding site. Histidine 34, aspartate 36, and histidine 68 together coordinate a divalent metal cation. Aspartate 36 (proton acceptor) is an active-site residue. Substrate-binding positions include histidine 68, 144-147, 177-179, and 199-200; these read GFGG, DGG, and GS. Aspartate 177 contributes to the a divalent metal cation binding site. Aspartate 177 (proton donor) is an active-site residue.

This sequence belongs to the ribulose-phosphate 3-epimerase family. It depends on a divalent metal cation as a cofactor.

The catalysed reaction is D-ribulose 5-phosphate = D-xylulose 5-phosphate. It functions in the pathway carbohydrate degradation. Functionally, catalyzes the reversible epimerization of D-ribulose 5-phosphate to D-xylulose 5-phosphate. This is Ribulose-phosphate 3-epimerase from Serratia marcescens.